A 1024-amino-acid chain; its full sequence is Protein translocase subunit SecA (1024 aa).

ATP contacts are provided by residues Gln-143, 161-165, and Asp-661; that span reads GEGKT. Positions 970 to 1024 are disordered; that stretch reads HKAAESVYTASSDEPETNQEESPQQPAIAEKKPGRNDLCPCGSGKKYKNCHGQQP. Residues Cys-1008, Cys-1010, Cys-1019, and His-1020 each contribute to the Zn(2+) site.

The protein belongs to the SecA family. As to quaternary structure, monomer and homodimer. Part of the essential Sec protein translocation apparatus which comprises SecA, SecYEG and auxiliary proteins SecDF. Other proteins may also be involved. Zn(2+) serves as cofactor.

Its subcellular location is the cell inner membrane. The protein localises to the cytoplasm. It catalyses the reaction ATP + H2O + cellular proteinSide 1 = ADP + phosphate + cellular proteinSide 2.. In terms of biological role, part of the Sec protein translocase complex. Interacts with the SecYEG preprotein conducting channel. Has a central role in coupling the hydrolysis of ATP to the transfer of proteins into and across the cell membrane, serving as an ATP-driven molecular motor driving the stepwise translocation of polypeptide chains across the membrane. The protein is Protein translocase subunit SecA of Pelodictyon phaeoclathratiforme (strain DSM 5477 / BU-1).